The following is a 361-amino-acid chain: Phospho-N-acetylmuramoyl-pentapeptide-transferase (361 aa).

Helical transmembrane passes span 27–47 (GAFF…INLL), 72–92 (TPTM…LLWA), 98–118 (YVWL…MDDF), 135–155 (LAMG…LHPE), 169–189 (TLIN…AGSA), 200–220 (GLAI…AYAV), 240–260 (IFVF…YNAP), 263–283 (AVFM…AIAV), 289–309 (IVLV…IIQV), and 338–358 (QIVI…LATL).

Belongs to the glycosyltransferase 4 family. MraY subfamily. Mg(2+) serves as cofactor.

The protein localises to the cell inner membrane. It catalyses the reaction UDP-N-acetyl-alpha-D-muramoyl-L-alanyl-gamma-D-glutamyl-meso-2,6-diaminopimeloyl-D-alanyl-D-alanine + di-trans,octa-cis-undecaprenyl phosphate = di-trans,octa-cis-undecaprenyl diphospho-N-acetyl-alpha-D-muramoyl-L-alanyl-D-glutamyl-meso-2,6-diaminopimeloyl-D-alanyl-D-alanine + UMP. Its pathway is cell wall biogenesis; peptidoglycan biosynthesis. Catalyzes the initial step of the lipid cycle reactions in the biosynthesis of the cell wall peptidoglycan: transfers peptidoglycan precursor phospho-MurNAc-pentapeptide from UDP-MurNAc-pentapeptide onto the lipid carrier undecaprenyl phosphate, yielding undecaprenyl-pyrophosphoryl-MurNAc-pentapeptide, known as lipid I. This chain is Phospho-N-acetylmuramoyl-pentapeptide-transferase, found in Dinoroseobacter shibae (strain DSM 16493 / NCIMB 14021 / DFL 12).